We begin with the raw amino-acid sequence, 361 residues long: Phosphoserine aminotransferase (361 aa).

R42 contributes to the L-glutamate binding site. Pyridoxal 5'-phosphate is bound by residues 76 to 77, W102, T153, D173, and Q196; that span reads AR. K197 carries the N6-(pyridoxal phosphate)lysine modification. Residue 238 to 239 coordinates pyridoxal 5'-phosphate; sequence NT.

The protein belongs to the class-V pyridoxal-phosphate-dependent aminotransferase family. SerC subfamily. In terms of assembly, homodimer. Requires pyridoxal 5'-phosphate as cofactor.

It is found in the cytoplasm. The enzyme catalyses O-phospho-L-serine + 2-oxoglutarate = 3-phosphooxypyruvate + L-glutamate. It carries out the reaction 4-(phosphooxy)-L-threonine + 2-oxoglutarate = (R)-3-hydroxy-2-oxo-4-phosphooxybutanoate + L-glutamate. The protein operates within amino-acid biosynthesis; L-serine biosynthesis; L-serine from 3-phospho-D-glycerate: step 2/3. It functions in the pathway cofactor biosynthesis; pyridoxine 5'-phosphate biosynthesis; pyridoxine 5'-phosphate from D-erythrose 4-phosphate: step 3/5. In terms of biological role, catalyzes the reversible conversion of 3-phosphohydroxypyruvate to phosphoserine and of 3-hydroxy-2-oxo-4-phosphonooxybutanoate to phosphohydroxythreonine. The sequence is that of Phosphoserine aminotransferase from Buchnera aphidicola subsp. Acyrthosiphon pisum (strain Tuc7).